A 274-amino-acid polypeptide reads, in one-letter code: Ribosomal RNA small subunit methyltransferase A (274 aa).

Residues asparagine 20, leucine 22, glycine 47, glutamate 68, aspartate 90, and asparagine 110 each coordinate S-adenosyl-L-methionine.

This sequence belongs to the class I-like SAM-binding methyltransferase superfamily. rRNA adenine N(6)-methyltransferase family. RsmA subfamily.

The protein resides in the cytoplasm. It carries out the reaction adenosine(1518)/adenosine(1519) in 16S rRNA + 4 S-adenosyl-L-methionine = N(6)-dimethyladenosine(1518)/N(6)-dimethyladenosine(1519) in 16S rRNA + 4 S-adenosyl-L-homocysteine + 4 H(+). Specifically dimethylates two adjacent adenosines (A1518 and A1519) in the loop of a conserved hairpin near the 3'-end of 16S rRNA in the 30S particle. May play a critical role in biogenesis of 30S subunits. This is Ribosomal RNA small subunit methyltransferase A from Chlorobaculum parvum (strain DSM 263 / NCIMB 8327) (Chlorobium vibrioforme subsp. thiosulfatophilum).